Consider the following 307-residue polypeptide: Probable thioesterase KK1J (307 aa).

This sequence belongs to the AMT4 thioesterase family.

It functions in the pathway secondary metabolite biosynthesis. In terms of biological role, probable thioesterase; part of the gene cluster that mediates the biosynthesis of KK-1, a novel cyclic depsipeptide with 10 residues which is a promising active compound with high activity against many plant pathogens, especially Botrytis cinerea. Within the pathway, kk1J is not essential for the biosynthesis of KK-1, but plays a role for efficient production via correction of peptide chain synthesis by kk1B. The nonribosomal peptide synthetase (NRPS) kk1B catalyzes the elongation and cyclization of the decapeptide chain composed of 1 D-lactic acid residue (D-Lac), 1 pipecolic acid residue (Pip), 1 aspartic acid residue (Asp), 1 isoleucine residue (Ile), 1 glycine residue (Gly), 1 tyrosine residue (Tyr) and 4 valine residues (Val). The Asp, Ile and 3 Val residues are N-methylated by the 5 methyltransferase domains from the NRPS (found in modules 3, 5, 6, 7 and 9), whereas the Tyr residue is O-methylated by the cluster encoded O-methyltransferase kk1A. The thioesterase kk1J is likely to be involved in the corrective mechanism of peptide chain synthesis. The D-lactate dehydrogenase kk1H is involved in the synthesis of D-lactic acid from pyruvic acid, which is recognized by the A domain of the first kk1B module. The pyrroline-5-carboxylate reductase kk1I is involved in the synthesis of the L-pipecolic acid residue of KK-1 from delta-1-pyrroline-5-carboxylate (P5C), a metabolic intermediate of lysine. It still is unclear how kk1C and kk1D are involved in the production of KK-1. The sequence is that of Probable thioesterase KK1J from Curvularia clavata.